Reading from the N-terminus, the 396-residue chain is Activity-regulated cytoskeleton-associated protein (396 aa).

A coiled-coil region spans residues 54–78 (SKQVERELKGLHRSVGKLENNLDGY). The interval 89–100 (KSIKACLCRCQE) is interaction with SH3GL1 or SH3GL3. A disordered region spans residues 177–207 (PPAAGELPEQESVEAQQYQSWGPGEDGQPSP). The interaction with DNM2 stretch occupies residues 195-214 (QSWGPGEDGQPSPGVDTQIF). The residue at position 260 (Ser-260) is a Phosphoserine; by CaMK2. Glycyl lysine isopeptide (Lys-Gly) (interchain with G-Cter in ubiquitin) cross-links involve residues Lys-268 and Lys-269. Position 278 is a phosphothreonine (Thr-278). The segment at 356 to 396 (QDGLEQAAEPSGTPLPTEDETEALTPALTSESVASDRTQPE) is disordered. Over residues 382–396 (ALTSESVASDRTQPE) the composition is skewed to polar residues.

The protein belongs to the ARC/ARG3.1 family. As to quaternary structure, homooligomer; homooligomerizes into virion-like capsids. Interacts with SH3GL1/endophilin-2, SH3GL3/endophilin-3 and DNM2/DYN2. Interacts with CAMK2B (in the kinase inactive state); leading to target ARC to inactive synapses. Interacts with PSEN1. Interacts with GRIN2A and GRIN2B; inhibiting homooligomerization. In terms of processing, ubiquitinated by UBE3A, leading to its degradation by the proteasome, thereby promoting AMPA receptors (AMPARs) expression at synapses. Ubiquitinated by RNF216 at Lys-268 and Lys-269 limiting ARC protein levels induced by synaptic activity and thus regulating ARC-dependent forms of synaptic plasticity. Palmitoylation anchors the protein into the membrane by allowing direct insertion into the hydrophobic core of the lipid bilayer. Post-translationally, phosphorylation at Ser-260 by CaMK2 prevents homooligomerization into virion-like capsids by disrupting an interaction surface essential for high-order oligomerization. Phosphorylation by CaMK2 inhibits synaptic activity. As to expression, expressed in brain and testis. In primary visual cortex, detected in all cortical layers with the exception of layer 5: present at highest level in layers 2/3 and 4, the predominant sites of ocular dominance plasticity (at protein level). Also expressed in skin-migratory dendritic cells.

It is found in the extracellular vesicle membrane. It localises to the postsynaptic cell membrane. Its subcellular location is the synapse. The protein resides in the postsynaptic density. The protein localises to the early endosome membrane. It is found in the cell projection. It localises to the dendrite. Its subcellular location is the cytoplasm. The protein resides in the cytoskeleton. The protein localises to the cell cortex. It is found in the dendritic spine. It localises to the cytoplasmic vesicle. Its subcellular location is the secretory vesicle. The protein resides in the acrosome. The protein localises to the clathrin-coated vesicle membrane. Master regulator of synaptic plasticity that self-assembles into virion-like capsids that encapsulate RNAs and mediate intercellular RNA transfer in the nervous system. ARC protein is released from neurons in extracellular vesicles that mediate the transfer of ARC mRNA into new target cells, where ARC mRNA can undergo activity-dependent translation. ARC capsids are endocytosed and are able to transfer ARC mRNA into the cytoplasm of neurons. Acts as a key regulator of synaptic plasticity: required for protein synthesis-dependent forms of long-term potentiation (LTP) and depression (LTD) and for the formation of long-term memory. Regulates synaptic plasticity by promoting endocytosis of AMPA receptors (AMPARs) in response to synaptic activity: this endocytic pathway maintains levels of surface AMPARs in response to chronic changes in neuronal activity through synaptic scaling, thereby contributing to neuronal homeostasis. Acts as a postsynaptic mediator of activity-dependent synapse elimination in the developing cerebellum by mediating elimination of surplus climbing fiber synapses. Accumulates at weaker synapses, probably to prevent their undesired enhancement. This suggests that ARC-containing virion-like capsids may be required to eliminate synaptic material. Required to transduce experience into long-lasting changes in visual cortex plasticity and for long-term memory. Involved in postsynaptic trafficking and processing of amyloid-beta A4 (APP) via interaction with PSEN1. In addition to its role in synapses, also involved in the regulation of the immune system: specifically expressed in skin-migratory dendritic cells and regulates fast dendritic cell migration, thereby regulating T-cell activation. This is Activity-regulated cytoskeleton-associated protein from Mus musculus (Mouse).